The following is a 181-amino-acid chain: NADH-quinone oxidoreductase subunit 2 (181 aa).

[2Fe-2S] cluster contacts are provided by Cys83, Ser87, Cys88, Cys124, and Cys128. A disulfide bond links Cys144 and Cys172.

Belongs to the complex I 24 kDa subunit family. As to quaternary structure, NDH-1 is composed of 15 different subunits, Nqo1 to Nqo15. The complex has a L-shaped structure, with the hydrophobic arm (subunits Nqo7, Nqo8 and Nqo10 to Nqo14) embedded in the membrane and the hydrophilic peripheral arm (subunits Nqo1 to Nqo6, Nqo9 and Nqo15) protruding into the bacterial cytoplasm. The hydrophilic domain contains all the redox centers. [2Fe-2S] cluster serves as cofactor.

The protein localises to the cell membrane. The catalysed reaction is a quinone + NADH + 5 H(+)(in) = a quinol + NAD(+) + 4 H(+)(out). In terms of biological role, NDH-1 shuttles electrons from NADH, via FMN and iron-sulfur (Fe-S) centers, to quinones in the respiratory chain. The immediate electron acceptor for the enzyme in this species is menaquinone. Couples the redox reaction to proton translocation (for every two electrons transferred, four hydrogen ions are translocated across the cytoplasmic membrane), and thus conserves the redox energy in a proton gradient required for the synthesis of ATP. This is NADH-quinone oxidoreductase subunit 2 (nqo2) from Thermus thermophilus (strain ATCC 27634 / DSM 579 / HB8).